Here is a 255-residue protein sequence, read N- to C-terminus: tRNA uridine(34) hydroxylase (255 aa).

Residues 125–219 enclose the Rhodanese domain; sequence AAPDTLLIDT…YLEGIPESES (95 aa). Catalysis depends on cysteine 179, which acts as the Cysteine persulfide intermediate.

Belongs to the TrhO family.

It catalyses the reaction uridine(34) in tRNA + AH2 + O2 = 5-hydroxyuridine(34) in tRNA + A + H2O. Catalyzes oxygen-dependent 5-hydroxyuridine (ho5U) modification at position 34 in tRNAs. In Nitrobacter hamburgensis (strain DSM 10229 / NCIMB 13809 / X14), this protein is tRNA uridine(34) hydroxylase.